The following is a 60-amino-acid chain: Potassium channel toxin alpha-KTx 3.16 (60 aa).

The signal sequence occupies residues 1-23 (MKVFSAVLIILFVCSMIIGISEG). Intrachain disulfides connect C30–C50, C36–C55, and C40–C57.

This sequence belongs to the short scorpion toxin superfamily. Potassium channel inhibitor family. Alpha-KTx 03 subfamily. As to expression, expressed by the venom gland.

Its subcellular location is the secreted. Functionally, potassium channel inhibitor. The protein is Potassium channel toxin alpha-KTx 3.16 of Mesobuthus gibbosus (Mediterranean checkered scorpion).